Here is a 160-residue protein sequence, read N- to C-terminus: Sulfur-rich protein (160 aa).

The next 2 membrane-spanning stretches (helical) occupy residues I63–L83 and F92–M112.

It is found in the membrane. In Chlamydophila psittaci (strain ATCC VR-125 / 6BC) (Chlamydia psittaci), this protein is Sulfur-rich protein (srp).